We begin with the raw amino-acid sequence, 216 residues long: Probable csgAB operon transcriptional regulatory protein (216 aa).

Positions 149 to 214 (NSTESALLTH…QAVSWANDNL (66 aa)) constitute an HTH luxR-type domain. Residues 173-192 (NNEIARSLFISENTVKTHLY) constitute a DNA-binding region (H-T-H motif).

In terms of biological role, the master regulator for adhesive curli fimbriae expression; necessary for transcription of the csgAB operon. Plays a positive role in biofilm formation. The sequence is that of Probable csgAB operon transcriptional regulatory protein from Salmonella typhimurium (strain LT2 / SGSC1412 / ATCC 700720).